The sequence spans 828 residues: MQNSVSVPPKDEGESNIPSGTIQSRKGLQNKSQFRTIAPKIVPKVLTSRMLPCHSPSRSDQVNLGPSINSKLLGMSTQNYALMQVAGQEGTFSLVALPHVASAQPIQKPRMSLPENLKLPIPRYQPPRNSKASRKKPILIFPKSGCSKAPAQTQMCPQMSPSPPHHPELLYKPSPFEEVPSLEQAPASISTAALTNGSDHGDLRPPVTNTHGSLNPPATPASSTPEEPAKQDLTALSGKAHFVSKITSSKPSAVASEKFKEQVDLAKTMTNLSPTILGNAVQLISSVPKGKLPIPPYSRMKTMEVYKIKSDANIAGFSLPGPKADCDKIPSTTEGFNAATKVASRLPVPQVSQQSACESAFCPPTKLDLNHKTKLNSGAAKRKGRKRKVPDEILAFQGKRRKYIINKCRDGKERVKNDPQEFRDQKLGTLKKYRSIMPKPIMVIPTLASLASPTTLQSQMLGGLGQDVLLNNSLTPKYLGCKQDNSSSPKPSSVFRNGFSGIKKPWHRCHVCNHHFQFKQHLRDHMNTHTNRRPYSCRICRKSYVRPGSLSTHMKLHHGENRLKKLMCCEFCAKVFGHIRVYFGHLKEVHRVVISTEPAPSELQPGDIPKNRDMSVRGMEGSLERENKSNLEEDFLLNQADEVKLQIKCGRCQITAQSFAEIKFHLLDVHGEEIEGRLQEGTFPGSKGTQEELVQHASPDWKRHPERGKPEKVHSSSEESHACPRLKRQLHLHQNGVEMLMENEGPQSGTNKPRETCQGPECPGLHTFLLWSHSGFNCLLCAEMLGRKEDLLHHWKHQHNCEDPSKLWAILNTVSNQGVIELSSEAEK.

Disordered regions lie at residues 1-29, 143-173, and 193-231; these read MQNSVSVPPKDEGESNIPSGTIQSRKGLQ, KSGCSKAPAQTQMCPQMSPSPPHHPELLYKP, and ALTNGSDHGDLRPPVTNTHGSLNPPATPASSTPEEPAKQ. 2 stretches are compositionally biased toward polar residues: residues 16–29 and 150–159; these read NIPSGTIQSRKGLQ and PAQTQMCPQM. 3 consecutive C2H2-type zinc fingers follow at residues 507-529, 535-557, and 567-590; these read HRCHVCNHHFQFKQHLRDHMNTH, YSCRICRKSYVRPGSLSTHMKLH, and MCCEFCAKVFGHIRVYFGHLKEVH. The tract at residues 680 to 721 is disordered; sequence EGTFPGSKGTQEELVQHASPDWKRHPERGKPEKVHSSSEESH. A compositionally biased stretch (basic and acidic residues) spans 689-721; the sequence is TQEELVQHASPDWKRHPERGKPEKVHSSSEESH. The C2H2-type 4 zinc-finger motif lies at 776 to 799; that stretch reads FNCLLCAEMLGRKEDLLHHWKHQH.

This sequence belongs to the krueppel C2H2-type zinc-finger protein family. In terms of tissue distribution, ubiquitous.

It localises to the nucleus. Its function is as follows. Isoform 1 acts as a transcriptional repressor. The polypeptide is Zinc finger protein 438 (ZNF438) (Homo sapiens (Human)).